The chain runs to 137 residues: Peptide methionine sulfoxide reductase MsrB (137 aa).

Positions 7–129 (PDHPATELNE…NSASLSFTDG (123 aa)) constitute a MsrB domain. The Zn(2+) site is built by Cys-46, Cys-49, Cys-95, and Cys-98. Residue Cys-118 is the Nucleophile of the active site.

It belongs to the MsrB Met sulfoxide reductase family. Zn(2+) is required as a cofactor.

The catalysed reaction is L-methionyl-[protein] + [thioredoxin]-disulfide + H2O = L-methionyl-(R)-S-oxide-[protein] + [thioredoxin]-dithiol. The chain is Peptide methionine sulfoxide reductase MsrB from Serratia proteamaculans (strain 568).